The chain runs to 501 residues: Cytochrome P450 3A31 (501 aa).

Heme is bound at residue cysteine 440.

Belongs to the cytochrome P450 family. It depends on heme as a cofactor. Expressed constitutively in liver.

It is found in the endoplasmic reticulum membrane. It localises to the microsome membrane. It catalyses the reaction an organic molecule + reduced [NADPH--hemoprotein reductase] + O2 = an alcohol + oxidized [NADPH--hemoprotein reductase] + H2O + H(+). Functionally, cytochromes P450 are a group of heme-thiolate monooxygenases. In liver microsomes, this enzyme is involved in an NADPH-dependent electron transport pathway. It oxidizes a variety of structurally unrelated compounds, including steroids, fatty acids, and xenobiotics. This is Cytochrome P450 3A31 (CYP3A31) from Mesocricetus auratus (Golden hamster).